A 499-amino-acid chain; its full sequence is MGVVLPPPPLSMLMLVLMLLPVASASEAEHRLFQYLFEDYNEIIRPVANVSHPVIIQFEVSMSQLVKVDEVNQIMETNLWLKQIWNDYKLKWKPSDYQGVEFMRVPAEKIWKPDIVLYNNADGDFQVDDKTKALLKYTGEVTWIPPAIFKSSCKIDVTYFPFDYQNCTMKFGSWSYDKAKIDLVLIGSSMNLKDYWESGEWAIIKAPGYKHEIKYNCCEEIYQDITYSLYIRRLPLFYTINLIIPCLLISFLTVLVFYLPSDCGEKVTLCISVLLSLTVFLLVITETIPSTSLVIPLIGEYLLFTMIFVTLSIVITVFVLNVHYRTPTTHTMPTWVKAVFLNLLPRVMFMTRPTSTEEDAPKTRNFYGAELSNLNCFSRADSKSCKEGYPCQDGTCGYCHHRRVKISNFSANLTRSSSSESVDAVLSLSALSPEIKEAIQSVKYIAENMKAQNVAKEIQDDWKYVAMVIDRIFLWVFILVCILGTAGLFLQPLMARDDT.

A signal peptide spans 1-25 (MGVVLPPPPLSMLMLVLMLLPVASA). Over 26–244 (SEAEHRLFQY…PLFYTINLII (219 aa)) the chain is Extracellular. 2 N-linked (GlcNAc...) asparagine glycosylation sites follow: asparagine 49 and asparagine 166. Intrachain disulfides connect cysteine 153–cysteine 167 and cysteine 217–cysteine 218. Residues 245 to 260 (PCLLISFLTVLVFYLP) traverse the membrane as a helical segment. At 261–262 (SD) the chain is on the cytoplasmic side. Residues 263 to 279 (CGEKVTLCISVLLSLTV) form a helical membrane-spanning segment. Glutamate 265 is a Na(+) binding site. Topologically, residues 280 to 301 (FLLVITETIPSTSLVIPLIGEY) are extracellular. The chain crosses the membrane as a helical span at residues 302-320 (LLFTMIFVTLSIVITVFVL). At 321–468 (NVHYRTPTTH…QDDWKYVAMV (148 aa)) the chain is on the cytoplasmic side. Residues serine 407 and serine 410 each carry the phosphoserine modification. A helical transmembrane segment spans residues 469–487 (IDRIFLWVFILVCILGTAG). Topologically, residues 488–499 (LFLQPLMARDDT) are extracellular.

It belongs to the ligand-gated ion channel (TC 1.A.9) family. Acetylcholine receptor (TC 1.A.9.1) subfamily. Alpha-3/CHRNA3 sub-subfamily. In terms of assembly, neuronal AChR is composed of two different types of subunits: alpha and beta. CHRNA3/Alpha-3 subunit can be combined to CHRNB2/beta-2 or CHRNB4/beta-4 to give rise to functional receptors. Part of a complex composed of STUB1/CHIP, VCP/p97, CHRNA3, and UBXN2A that modulates the ubiquitination and endoplasmic reticulum-associated degradation (ERAD) of CHRNA3. Within the complex UBXN2A acts as a scaffold protein required for the interaction of CHRNA3 with VCP/p97, this interaction also inhibits CHRNA3 ubiquitination by STUB1/CHIP and subsequently ERAD. Interacts with UBXN2A (via SEP domain), the interaction is required for the interaction of CHRNA3 in the STUB1:VCP:UBXN2A complex. Interacts with RIC3; which is required for proper folding and assembly. Interacts with LYPD6. Post-translationally, ubiquitinated; by STUB1/CHIP and thereafter degraded by the 26S proteosome complex. In terms of tissue distribution, expressed in the brain (at protein level).

The protein resides in the synaptic cell membrane. The protein localises to the cell membrane. It is found in the endoplasmic reticulum. Its subcellular location is the golgi apparatus. The enzyme catalyses K(+)(in) = K(+)(out). It catalyses the reaction Na(+)(in) = Na(+)(out). The catalysed reaction is Ca(2+)(in) = Ca(2+)(out). Activated by a myriad of ligands such as acetylcholine, cytisine, nicotine, choline and epibatidine. The heteropentamer CHRNA3:CHRNB2 activity is blocked by alpha-conotoxins ImI, ImII, PnIA, GID and MII. The heteropentamer CHRNA3:CHRNB4 activity is blocked by the alpha-conotoxin ImI. Functionally, component of neuronal acetylcholine receptors (nAChRs) that function as pentameric, ligand-gated cation channels with high calcium permeability among other activities. nAChRs are excitatory neurotrasnmitter receptors formed by a collection of nAChR subunits known to mediate synaptic transmission in the nervous system and the neuromuscular junction. Each nAchR subunit confers differential attributes to channel properties, including activation, deactivation and desensitization kinetics, pH sensitivity, cation permeability, and binding to allosteric modulators. CHRNA3 forms heteropentameric neuronal acetylcholine receptors with CHRNA5, CHRNB2 and CHRNB4. CHRNA3:CHRNB4 being predominant in neurons of the autonomic ganglia, it is known as ganglionic nicotinic receptor. CHRNA3:CHRNB4 or CHRNA3:CHRNA5:CHRNB4 play also an important role in the habenulo-interpeduncular tract, modulating the mesolimbic dopamine system and affecting reward circuits and addiction. Hypothalamic CHRNA3:CHRNB4 nAChR activation by nicotine leads to activation of POMC neurons and a decrease in food intake. Also expressed in the urothelium where it modulates reflex bladder activity by increasing intracellular calcium through extracellular influx and basal ATP release. The chain is Neuronal acetylcholine receptor subunit alpha-3 (Chrna3) from Mus musculus (Mouse).